A 319-amino-acid polypeptide reads, in one-letter code: Tryptophan--tRNA ligase (319 aa).

Residues 8-10 (QPS) and 16-17 (GN) each bind ATP. Positions 9–17 (PSGDLHIGN) match the 'HIGH' region motif. Asp131 is a binding site for L-tryptophan. ATP is bound by residues 143-145 (GKD), Val182, and 189-193 (KMSKS). The 'KMSKS' region signature appears at 189–193 (KMSKS).

It belongs to the class-I aminoacyl-tRNA synthetase family. In terms of assembly, homodimer.

It localises to the cytoplasm. It carries out the reaction tRNA(Trp) + L-tryptophan + ATP = L-tryptophyl-tRNA(Trp) + AMP + diphosphate + H(+). Functionally, catalyzes the attachment of tryptophan to tRNA(Trp). The protein is Tryptophan--tRNA ligase of Campylobacter jejuni subsp. jejuni serotype O:2 (strain ATCC 700819 / NCTC 11168).